A 486-amino-acid chain; its full sequence is FAD-dependent oxidoreductase domain-containing protein 1 (486 aa).

A helical membrane pass occupies residues 62 to 82; it reads EHSDVVIVGGGVLGLSVAYWL.

As to quaternary structure, associates with components of the mitochondrial respiratory chain complex I. FAD serves as cofactor.

Its subcellular location is the mitochondrion inner membrane. Functionally, required for the assembly of the mitochondrial membrane respiratory chain NADH dehydrogenase (Complex I). Involved in mid-late stages of complex I assembly. The chain is FAD-dependent oxidoreductase domain-containing protein 1 from Homo sapiens (Human).